The primary structure comprises 258 residues: 2-succinyl-6-hydroxy-2,4-cyclohexadiene-1-carboxylate synthase (258 aa).

This sequence belongs to the AB hydrolase superfamily. MenH family. As to quaternary structure, monomer.

It catalyses the reaction 5-enolpyruvoyl-6-hydroxy-2-succinyl-cyclohex-3-ene-1-carboxylate = (1R,6R)-6-hydroxy-2-succinyl-cyclohexa-2,4-diene-1-carboxylate + pyruvate. It functions in the pathway quinol/quinone metabolism; 1,4-dihydroxy-2-naphthoate biosynthesis; 1,4-dihydroxy-2-naphthoate from chorismate: step 3/7. Its pathway is quinol/quinone metabolism; menaquinone biosynthesis. Its function is as follows. Catalyzes a proton abstraction reaction that results in 2,5-elimination of pyruvate from 2-succinyl-5-enolpyruvyl-6-hydroxy-3-cyclohexene-1-carboxylate (SEPHCHC) and the formation of 2-succinyl-6-hydroxy-2,4-cyclohexadiene-1-carboxylate (SHCHC). In Enterobacter sp. (strain 638), this protein is 2-succinyl-6-hydroxy-2,4-cyclohexadiene-1-carboxylate synthase.